The primary structure comprises 81 residues: uncharacterized protein (81 aa).

Helical transmembrane passes span 4–24 (IFKM…FNYT) and 61–81 (NIYT…LHII).

It is found in the cell membrane. This is an uncharacterized protein from Bacillus subtilis (strain 168).